The sequence spans 292 residues: Peroxisomal 2,4-dienoyl-CoA reductase [(3E)-enoyl-CoA-producing] (292 aa).

Position 2 is an N-acetylalanine (Ala-2). NADP(+) is bound by residues 35-40 (GGGSGI), 60-64 (RSLQK), and Asp-86. Residue Arg-60 participates in substrate binding. Lys-64 bears the N6-acetyllysine mark. Substrate-binding positions include Arg-88, Phe-118, and 126–128 (SFN). At Lys-151 the chain carries N6-acetyllysine. NADP(+) is bound by residues Lys-182 and 208–214 (PGAISGT). Arg-219 is a binding site for substrate. Ser-287 carries the post-translational modification Phosphoserine. The Microbody targeting signal motif lies at 290-292 (AKL). At Lys-291 the chain carries N6-acetyllysine.

The protein belongs to the short-chain dehydrogenases/reductases (SDR) family. 2,4-dienoyl-CoA reductase subfamily. As to quaternary structure, monomer, dimer and oligomer.

Its subcellular location is the peroxisome. The catalysed reaction is a (2E,4Z)-dienoyl-CoA + NADPH + H(+) = a 4,5-saturated-(3E)-enoyl-CoA + NADP(+). It catalyses the reaction a (2E,4E)-dienoyl-CoA + NADPH + H(+) = a 4,5-saturated-(3E)-enoyl-CoA + NADP(+). It carries out the reaction (2E,4E)-hexadienoyl-CoA + NADPH + H(+) = (3E)-hexenoyl-CoA + NADP(+). The enzyme catalyses (2E,4E)-decadienoyl-CoA + NADPH + H(+) = (3E)-decenoyl-CoA + NADP(+). The catalysed reaction is (2E,4Z,7Z,10Z,13Z,16Z,19Z)-docosaheptaenoyl-CoA + NADPH + H(+) = (3E,7Z,10Z,13Z,16Z,19Z)-docosahexaenoyl-CoA + NADP(+). Functionally, auxiliary enzyme of beta-oxidation. Participates in the degradation of unsaturated fatty enoyl-CoA esters having double bonds in both even- and odd-numbered positions in peroxisome. Catalyzes the NADP-dependent reduction of 2,4-dienoyl-CoA to yield trans-3-enoyl-CoA. Has activity towards short and medium chain 2,4-dienoyl-CoAs, but also towards 2,4,7,10,13,16,19-docosaheptaenoyl-CoA, suggesting that it does not constitute a rate limiting step in the peroxisomal degradation of docosahexaenoic acid. The sequence is that of Peroxisomal 2,4-dienoyl-CoA reductase [(3E)-enoyl-CoA-producing] (Decr2) from Mus musculus (Mouse).